A 1079-amino-acid chain; its full sequence is Carbamoyl phosphate synthase large chain (1079 aa).

The interval 2 to 403 (PKSTDIKSIL…SIQKAIRGLE (402 aa)) is carboxyphosphate synthetic domain. ATP is bound by residues Arg-129, Arg-169, Gly-175, Gly-176, Glu-208, Leu-210, Glu-215, Gly-241, Ile-242, His-243, Gln-285, and Glu-299. The region spanning 133–328 (EHSMKKLNLE…IAKIAAKLAI (196 aa)) is the ATP-grasp 1 domain. The Mg(2+) site is built by Gln-285, Glu-299, and Asn-301. Positions 285, 299, and 301 each coordinate Mn(2+). The tract at residues 404–553 (VGASGFDSKI…YSTWEDECES (150 aa)) is oligomerization domain. Residues 554 to 936 (HPSKNNKKII…AFSKSMLGAH (383 aa)) are carbamoyl phosphate synthetic domain. The ATP-grasp 2 domain maps to 679 to 870 (QKTVNKLRLQ…LAKISVRVMC (192 aa)). ATP contacts are provided by Arg-715, Gln-754, Leu-756, Glu-761, Gly-786, Val-787, His-788, Ser-789, Gln-829, and Glu-841. 3 residues coordinate Mg(2+): Gln-829, Glu-841, and Asn-843. The Mn(2+) site is built by Gln-829, Glu-841, and Asn-843. An MGS-like domain is found at 937-1079 (TNMKKSGRVL…KKIQLFYTKK (143 aa)). Positions 937–1079 (TNMKKSGRVL…KKIQLFYTKK (143 aa)) are allosteric domain.

This sequence belongs to the CarB family. In terms of assembly, composed of two chains; the small (or glutamine) chain promotes the hydrolysis of glutamine to ammonia, which is used by the large (or ammonia) chain to synthesize carbamoyl phosphate. Tetramer of heterodimers (alpha,beta)4. Mg(2+) is required as a cofactor. The cofactor is Mn(2+).

It catalyses the reaction hydrogencarbonate + L-glutamine + 2 ATP + H2O = carbamoyl phosphate + L-glutamate + 2 ADP + phosphate + 2 H(+). The enzyme catalyses hydrogencarbonate + NH4(+) + 2 ATP = carbamoyl phosphate + 2 ADP + phosphate + 2 H(+). The protein operates within amino-acid biosynthesis; L-arginine biosynthesis; carbamoyl phosphate from bicarbonate: step 1/1. Its pathway is pyrimidine metabolism; UMP biosynthesis via de novo pathway; (S)-dihydroorotate from bicarbonate: step 1/3. Functionally, large subunit of the glutamine-dependent carbamoyl phosphate synthetase (CPSase). CPSase catalyzes the formation of carbamoyl phosphate from the ammonia moiety of glutamine, carbonate, and phosphate donated by ATP, constituting the first step of 2 biosynthetic pathways, one leading to arginine and/or urea and the other to pyrimidine nucleotides. The large subunit (synthetase) binds the substrates ammonia (free or transferred from glutamine from the small subunit), hydrogencarbonate and ATP and carries out an ATP-coupled ligase reaction, activating hydrogencarbonate by forming carboxy phosphate which reacts with ammonia to form carbamoyl phosphate. This is Carbamoyl phosphate synthase large chain from Buchnera aphidicola subsp. Acyrthosiphon pisum (strain APS) (Acyrthosiphon pisum symbiotic bacterium).